The sequence spans 264 residues: Hydroxyethylthiazole kinase (264 aa).

Met40 lines the substrate pocket. ATP is bound by residues Lys116 and Thr161. Position 188 (Gly188) interacts with substrate.

The protein belongs to the Thz kinase family. Mg(2+) serves as cofactor.

It catalyses the reaction 5-(2-hydroxyethyl)-4-methylthiazole + ATP = 4-methyl-5-(2-phosphooxyethyl)-thiazole + ADP + H(+). It participates in cofactor biosynthesis; thiamine diphosphate biosynthesis; 4-methyl-5-(2-phosphoethyl)-thiazole from 5-(2-hydroxyethyl)-4-methylthiazole: step 1/1. Its function is as follows. Catalyzes the phosphorylation of the hydroxyl group of 4-methyl-5-beta-hydroxyethylthiazole (THZ). In Staphylococcus carnosus (strain TM300), this protein is Hydroxyethylthiazole kinase.